The primary structure comprises 92 residues: Small ribosomal subunit protein uS19 (92 aa).

This sequence belongs to the universal ribosomal protein uS19 family.

Functionally, protein S19 forms a complex with S13 that binds strongly to the 16S ribosomal RNA. This Rippkaea orientalis (strain PCC 8801 / RF-1) (Cyanothece sp. (strain PCC 8801)) protein is Small ribosomal subunit protein uS19.